We begin with the raw amino-acid sequence, 414 residues long: MKTVTISKERLRIHIEQLGEIGKTKDKGVQRLALSKEDREATLLVSEWMREAGLTVTHDHFGNLIGRKEGETPSLPSVMIGSHIDSVRNGGKFDGVIGVLAGIEIVHAISEANVVHEHSIEVVAFCEEEGSRFNDGLFGSRGMVGKVKPEDLQKVDDNNVTRYEALKTFGFGIDPDFTHQSIREIGDIKHYFEMHIEQGPYLEKNNYPIGIVSGIAGPSWFKVRLVGEAGHAGTVPMSLRKDPLVGAAEVIKEVETLCMNDPNAPTVGTVGRIAAFPGGSNIIPESVEFTLDIRDIELERRNKIIEKIEEKIKLVSNTRGLEYQIEKNMAAVPVKCSENLINSLKQSCKELEIDAPIIVSGAGHDAMFLAEITEIGMVFVRCRNGISHSPKEWAEIDDILTGTKVLYESIIKHI.

4 residues coordinate a divalent metal cation: H83, D94, E129, and H195. 5 residues coordinate an N-carbamoyl-L-alpha-amino acid: Q198, H231, N281, R294, and G363. Positions 214–333 (GIAGPSWFKV…QIEKNMAAVP (120 aa)) are involved in dimerization. H388 provides a ligand contact to a divalent metal cation.

The protein belongs to the peptidase M20 family. Homodimer. Mn(2+) is required as a cofactor. Ni(2+) serves as cofactor. Requires Co(2+) as cofactor. It depends on Fe(2+) as a cofactor.

It catalyses the reaction an N-carbamoyl-L-alpha-amino acid + H2O + 2 H(+) = an L-alpha-amino acid + NH4(+) + CO2. The catalysed reaction is N-carbamoyl-L-methionine + H2O + 2 H(+) = L-methionine + NH4(+) + CO2. Functionally, catalyzes the hydrolysis of N-carbamoyl-L-alpha-amino acids to free L-alpha-amino acids. Is strictly L-specific since it is inactive toward N-carbamoyl-D-alpha-amino acids. The chain is N-carbamoyl-L-amino-acid amidohydrolase from Pseudomonas sp. (strain NS671).